A 548-amino-acid chain; its full sequence is Viridiflorene synthase (548 aa).

Residues aspartate 301, aspartate 305, aspartate 444, threonine 448, and glutamate 452 each coordinate Mg(2+). Residues 301–305 (DDTFD) carry the DDXXD motif motif.

It belongs to the terpene synthase family. Tpsa subfamily. It depends on Mg(2+) as a cofactor. Expressed in stem and leaf trichomes. Detected in roots, fruits and flowers.

It is found in the cytoplasm. The catalysed reaction is (2E,6E)-farnesyl diphosphate = viridiflorene + diphosphate. The protein operates within secondary metabolite biosynthesis; terpenoid biosynthesis. Sesquiterpene synthase involved in the production of viridiflorene from (E,E)-farnesyl diphosphate. Can also use (Z,Z)-FPP to make several unidentified sesquiterpenes. This is Viridiflorene synthase from Solanum lycopersicum (Tomato).